A 72-amino-acid polypeptide reads, in one-letter code: Large ribosomal subunit protein uL29 (72 aa).

This sequence belongs to the universal ribosomal protein uL29 family.

The sequence is that of Large ribosomal subunit protein uL29 from Prochlorococcus marinus subsp. pastoris (strain CCMP1986 / NIES-2087 / MED4).